Reading from the N-terminus, the 490-residue chain is DNA-binding protein D-ETS-3 (490 aa).

2 disordered regions span residues 190 to 255 and 271 to 294; these read TASS…SGGG and SSTQ…SQLR. The span at 196–207 shows a compositional bias: basic and acidic residues; that stretch reads HVEHKVRADKST. Positions 211-227 are enriched in low complexity; that stretch reads ATTSSHAAAPSSSSSAS. Residues 244-255 are compositionally biased toward gly residues; the sequence is GTGGGASASGGG. Residues 271 to 280 are compositionally biased toward low complexity; that stretch reads SSTQSQGYSS. Positions 317-397 form a DNA-binding region, ETS; it reads IQLWQFLLEL…HGKRYAYKFD (81 aa).

The protein belongs to the ETS family. In terms of tissue distribution, embryonic ventral nervous system, higher in the thoracic than abdominal segments.

Its subcellular location is the nucleus. The polypeptide is DNA-binding protein D-ETS-3 (Ets65A) (Drosophila melanogaster (Fruit fly)).